The chain runs to 149 residues: Calmodulin (149 aa).

Position 2 is an N-acetylalanine (A2). 4 EF-hand domains span residues 8 to 43 (EQIA…LGQN), 44 to 79 (PTEA…KMKE), 81 to 116 (DSEE…LGEK), and 117 to 149 (LTDE…MTSK). The Ca(2+) site is built by D21, D23, D25, T27, E32, D57, D59, N61, T63, E68, D94, D96, N98, and E105. Residue K116 is modified to N6,N6,N6-trimethyllysine. D130, D132, D134, Q136, and E141 together coordinate Ca(2+).

It belongs to the calmodulin family.

Its function is as follows. Calmodulin mediates the control of a large number of enzymes, ion channels and other proteins by Ca(2+). Among the enzymes to be stimulated by the calmodulin-Ca(2+) complex are a number of protein kinases and phosphatases. The sequence is that of Calmodulin from Suberites domuncula (Sponge).